The sequence spans 861 residues: Leucine--tRNA ligase (861 aa).

A 'HIGH' region motif is present at residues P42 to H52. The short motif at K619–S623 is the 'KMSKS' region element. An ATP-binding site is contributed by K622.

The protein belongs to the class-I aminoacyl-tRNA synthetase family.

It localises to the cytoplasm. The catalysed reaction is tRNA(Leu) + L-leucine + ATP = L-leucyl-tRNA(Leu) + AMP + diphosphate. This chain is Leucine--tRNA ligase, found in Haemophilus influenzae (strain PittGG).